The chain runs to 21 residues: Phospholipase A2 crotoxin basic chain (21 aa).

This sequence belongs to the phospholipase A2 family. Group II subfamily. Ca(2+) is required as a cofactor. As to expression, expressed by the venom gland.

Its subcellular location is the secreted. It carries out the reaction a 1,2-diacyl-sn-glycero-3-phosphocholine + H2O = a 1-acyl-sn-glycero-3-phosphocholine + a fatty acid + H(+). In terms of biological role, snake venom phospholipase A2 (PLA2) that induces a conspicuous local myotoxic effect and moderate footpad edema. In vitro, it shows anticoagulant effects and is not cytotoxic on myoblast but is able to lyse myotubes. PLA2 catalyzes the calcium-dependent hydrolysis of the 2-acyl groups in 3-sn-phosphoglycerides. The chain is Phospholipase A2 crotoxin basic chain from Crotalus durissus cumanensis (South American rattlesnake).